Here is a 221-residue protein sequence, read N- to C-terminus: Iron-sulfur cluster repair protein YtfE (221 aa).

Belongs to the RIC family. YtfE subfamily. In terms of assembly, homodimer.

Its subcellular location is the cytoplasm. In terms of biological role, di-iron-containing protein involved in the repair of iron-sulfur clusters damaged by oxidative and nitrosative stress conditions. The protein is Iron-sulfur cluster repair protein YtfE of Yersinia pseudotuberculosis serotype O:1b (strain IP 31758).